An 858-amino-acid chain; its full sequence is Heat shock protein 105 kDa (858 aa).

Serine 2 is modified (N-acetylserine). N6-acetyllysine is present on lysine 471. 2 disordered regions span residues 500 to 585 and 801 to 858; these read KVPT…PPEA and VTQP…MDLD. Residues 504–515 show a composition bias toward acidic residues; sequence EEEDGSSLEADM. Residues serine 509 and serine 510 each carry the phosphoserine modification. A compositionally biased stretch (polar residues) spans 533 to 549; the sequence is QQDNSEAGTQPQVQTDG. Serine 558 carries the phosphoserine modification. Phosphothreonine is present on threonine 562. 2 stretches are compositionally biased toward basic and acidic residues: residues 564-585 and 806-815; these read EESK…PPEA and PKIESPKLER. The residue at position 810 (serine 810) is a Phosphoserine. Threonine 816 is modified (phosphothreonine).

The protein belongs to the heat shock protein 70 family. Interacts with HSPA8/HSC70. Interacts with HSPA1A (via NBD) and HSPA1B (via NBD). In terms of processing, phosphorylation on Ser-509 may be important for regulation of the HSPA8/HSC70 chaperone activity. As to expression, expressed in neurons in the cerebrum and Purkinje cells in the cerebellum (at protein level). Expressed in testis and no expression or only low-level expression in liver, spleen, lung, and kidney (at protein level). Highly expressed in the brain and moderately expressed in lung, heart, thymus, spleen, liver, and small intestine.

It localises to the cytoplasm. Its subcellular location is the nucleus. Acts as a nucleotide-exchange factor (NEF) for chaperone proteins HSPA1A and HSPA1B, promoting the release of ADP from HSPA1A/B thereby triggering client/substrate protein release. Prevents the aggregation of denatured proteins in cells under severe stress, on which the ATP levels decrease markedly. Inhibits HSPA8/HSC70 ATPase and chaperone activities. The sequence is that of Heat shock protein 105 kDa (Hsph1) from Mus musculus (Mouse).